Consider the following 343-residue polypeptide: MGVPIGDLVPRKEIDLENLYGKKIAIDALNAIYQFLSTIRQRDGTPLMDSKGRITSHLSGLFYRTINLMEAGIKPAYVFDGKPPEFKRKELEKRREAREEAELKWKEALAKGNLEEARKYAQRATKVNEMLIEDAKKLLQLMGIPIIQAPSEGEAQAAYMASKGDVYASASQDYDSLLFGAPRLIRNLTITGKRKMPGKDVYVEIKPELVVLDEVLKELKITREKLIELAILVGTDYNPGGVKGIGPKKALEIVRYSRDPLAKFQRQSDVDLYAIKEFFLNPPVTNEYSLSWKEPDEEGILKFLCDEHNFSEERVKNGIERLKKAIKAGRQSTLESWFVKKKP.

Residues 1–98 (MGVPIGDLVP…KELEKRREAR (98 aa)) are N-domain. The Mg(2+) site is built by aspartate 27, aspartate 80, glutamate 152, glutamate 154, aspartate 173, aspartate 175, and aspartate 236. Residues 116-258 (EARKYAQRAT…KALEIVRYSR (143 aa)) form an I-domain region. The segment at 330–338 (RQSTLESWF) is interaction with PCNA.

This sequence belongs to the XPG/RAD2 endonuclease family. FEN1 subfamily. In terms of assembly, interacts with PCNA. PCNA stimulates the nuclease activity without altering cleavage specificity. The cofactor is Mg(2+).

Functionally, structure-specific nuclease with 5'-flap endonuclease and 5'-3' exonuclease activities involved in DNA replication and repair. During DNA replication, cleaves the 5'-overhanging flap structure that is generated by displacement synthesis when DNA polymerase encounters the 5'-end of a downstream Okazaki fragment. Binds the unpaired 3'-DNA end and kinks the DNA to facilitate 5' cleavage specificity. Cleaves one nucleotide into the double-stranded DNA from the junction in flap DNA, leaving a nick for ligation. Also involved in the base excision repair (BER) pathway. Acts as a genome stabilization factor that prevents flaps from equilibrating into structures that lead to duplications and deletions. Also possesses 5'-3' exonuclease activity on nicked or gapped double-stranded DNA. The sequence is that of Flap endonuclease 1 from Pyrococcus horikoshii (strain ATCC 700860 / DSM 12428 / JCM 9974 / NBRC 100139 / OT-3).